Here is a 271-residue protein sequence, read N- to C-terminus: Cell division protein FtsQ (271 aa).

The segment at 1 to 37 is disordered; sequence MAAGPTTAEKSGASGAKRSSKGSSDGPSRPGTRNRKF. Over 1–43 the chain is Cytoplasmic; it reads MAAGPTTAEKSGASGAKRSSKGSSDGPSRPGTRNRKFRMPGTR. The segment covering 8–24 has biased composition (low complexity); the sequence is AEKSGASGAKRSSKGSS. A helical membrane pass occupies residues 44-64; that stretch reads ALLITLGVLLLVAGGLWALYG. The Extracellular portion of the chain corresponds to 65–271; that stretch reads STWFRVERVK…APTAPASSGS (207 aa). Positions 68–137 constitute a POTRA domain; sequence FRVERVKTSG…HGIGLKVTER (70 aa).

It belongs to the FtsQ/DivIB family. FtsQ subfamily.

The protein localises to the cell membrane. Functionally, essential cell division protein. The protein is Cell division protein FtsQ of Streptomyces venezuelae (strain ATCC 10712 / CBS 650.69 / DSM 40230 / JCM 4526 / NBRC 13096 / PD 04745).